We begin with the raw amino-acid sequence, 354 residues long: Anthranilate phosphoribosyltransferase (354 aa).

Residues Gly94, 97–98, Thr102, 104–107, 122–130, and Ser134 each bind 5-phospho-alpha-D-ribose 1-diphosphate; these read GD, NIST, and KHGNRAASS. An anthranilate-binding site is contributed by Gly94. A Mg(2+)-binding site is contributed by Ser106. An anthranilate-binding site is contributed by Asn125. Arg180 provides a ligand contact to anthranilate. 2 residues coordinate Mg(2+): Asp238 and Glu239.

This sequence belongs to the anthranilate phosphoribosyltransferase family. In terms of assembly, homodimer. Requires Mg(2+) as cofactor.

It carries out the reaction N-(5-phospho-beta-D-ribosyl)anthranilate + diphosphate = 5-phospho-alpha-D-ribose 1-diphosphate + anthranilate. The protein operates within amino-acid biosynthesis; L-tryptophan biosynthesis; L-tryptophan from chorismate: step 2/5. Functionally, catalyzes the transfer of the phosphoribosyl group of 5-phosphorylribose-1-pyrophosphate (PRPP) to anthranilate to yield N-(5'-phosphoribosyl)-anthranilate (PRA). The chain is Anthranilate phosphoribosyltransferase from Streptomyces griseus subsp. griseus (strain JCM 4626 / CBS 651.72 / NBRC 13350 / KCC S-0626 / ISP 5235).